The chain runs to 402 residues: MTSTQRLWSGALPLLTALIVSIAATASLAGPRARDLGVPFEGTPGALNAITDVAGVEVGHTTVISGDGAMVIGKGPYRTGVTIIHPLGKTSLDGVAAGRAVINGTGEWTGMHLVDEVGQFLGPIALTGTGNVGLVHQSMMDWSVGKVPEEALFSRLLPVVAETLDNRLNDVFGHGLTRDHVFAALDGAKGGPVAEGNVGGGTGMIAYTFKGGIGTSSRVVSAGDTRYTVGVLVQANHGDRNDLRIAGVQIGKEIKGAWPEVNGIVAAGPDAGKPQDKNSLLIVIATDAPLMPHQLERMARRAALGVGRNGSTAGALSGEFALAFSTSHVIPLGGKPRLPAIINDTDSETMNALFRGVVQATEEALVNQLVASETMTGANNAKVYGIPHDQLARIMKARFPRR.

Positions 1–29 (MTSTQRLWSGALPLLTALIVSIAATASLA) are cleaved as a signal peptide. Serine 279 acts as the Nucleophile in catalysis. Residues serine 317 and glutamate 319 each act as proton donor/acceptor in the active site.

Belongs to the peptidase S58 family. Heterooctamer of 4 heterodimers ((alpha:beta)4); each heterodimer is composed of an alpha subunit and a beta subunit processed from the same precursor. In terms of processing, autoproteolytic processing to generate the alpha and beta subunit is required for self-activation and is proposed to use a similar mechanism as substrate cleavage.

It is found in the periplasm. It catalyses the reaction Cleaves N-terminal beta-homoamino acids from peptides composed of 2 to 6 amino acids.. Its activity is regulated as follows. Inhibited by AEBSF (4-(2-aminoethyl)benzenesulfonyl fluoride, Pefabloc SC), ampicillin and AMP(hyd) (ampillicin-derived penicilloic acid). Functionally, beta-aminopeptidase that can cleave synthetic beta-peptides which consist of backbone-elongated beta-amino acid residues that are not processed by common proteolytic enzymes. Can cleave the beta-peptides beta-homoVal-beta-homoAla-beta-homoLeu and beta-homoAla-beta-homoLeu. Requires a beta-amino acid at the N-terminus of peptide substrates and cleaves the peptide bond between the N-terminal beta-amino acid and the amino acid at the second position of tripeptidic substrates of the general structure H-betahXaa-Ile-betahTyr-OH according to the following preferences with regard to the side chain of the N-terminal beta-amino acid: aliphatic and aromatic &gt; OH-containing &gt; hydrogen, basic and polar. The sequence is that of Beta-peptidyl aminopeptidase BapA from Sphingosinicella xenopeptidilytica.